The primary structure comprises 199 residues: Phosphatidylethanolamine N-methyltransferase (199 aa).

The Lumenal segment spans residues 2–12; it reads SWLLGYVDPTE. Positions 13 to 33 form an intramembrane region, helical; the sequence is PSFVAAVLTIVFNPLFWNVVA. Over 34 to 45 the chain is Lumenal; sequence RWEQRTRKLSRA. Residues 46-66 form a helical membrane-spanning segment; it reads FGSPYLACYSLGSIILLLNIL. The Cytoplasmic portion of the chain corresponds to 67-93; that stretch reads RSHCFTQAMMSQPKMEGLDSHTIYFLG. The helical transmembrane segment at 94–114 threads the bilayer; sequence LALLGWGLVFVLSSFYALGFT. An S-adenosyl-L-methionine-binding site is contributed by 98-100; the sequence is GWG. The Lumenal segment spans residues 115–157; that stretch reads GTFLGDYFGILKESRVTTFPFSVLDNPMYWGSTANYLGWALMH. Residues 158-178 traverse the membrane as a helical segment; it reads ASPTGLLLTVLVALVYVVALL. Topologically, residues 179-199 are cytoplasmic; that stretch reads FEEPFTAEIYRRKATRLHKRS. 180-181 serves as a coordination point for S-adenosyl-L-methionine; that stretch reads EE.

The protein belongs to the class VI-like SAM-binding methyltransferase superfamily. PEMT/PEM2 methyltransferase family. As to expression, expressed in liver (at protein level).

It is found in the endoplasmic reticulum membrane. The protein localises to the mitochondrion membrane. The catalysed reaction is a 1,2-diacyl-sn-glycero-3-phosphoethanolamine + S-adenosyl-L-methionine = a 1,2-diacyl-sn-glycero-3-phospho-N-methylethanolamine + S-adenosyl-L-homocysteine + H(+). It carries out the reaction a 1,2-diacyl-sn-glycero-3-phospho-N-methylethanolamine + S-adenosyl-L-methionine = a 1,2-diacyl-sn-glycero-3-phospho-N,N-dimethylethanolamine + S-adenosyl-L-homocysteine + H(+). The enzyme catalyses a 1,2-diacyl-sn-glycero-3-phospho-N,N-dimethylethanolamine + S-adenosyl-L-methionine = a 1,2-diacyl-sn-glycero-3-phosphocholine + S-adenosyl-L-homocysteine + H(+). It catalyses the reaction 1,2-di-(9Z-octadecenoyl)-sn-glycero-3-phosphoethanolamine + S-adenosyl-L-methionine = 1,2-di-(9Z-octadecenoyl)-sn-glycero-3-phospho-N-methylethanolamine + S-adenosyl-L-homocysteine + H(+). The catalysed reaction is 1,2-di-(9Z-octadecenoyl)-sn-glycero-3-phospho-N-methylethanolamine + S-adenosyl-L-methionine = 1,2-di-(9Z-octadecenoyl)-sn-glycero-3-phospho-N,N-dimethylethanolamine + S-adenosyl-L-homocysteine + H(+). It carries out the reaction 1,2-di-(9Z-octadecenoyl)-sn-glycero-3-phospho-N,N-dimethylethanolamine + S-adenosyl-L-methionine = 1,2-di-(9Z-octadecenoyl)-sn-glycero-3-phosphocholine + S-adenosyl-L-homocysteine + H(+). The enzyme catalyses 1,2-di-(9Z,12Z-octadecadienoyl)-sn-glycero-3-phosphoethanolamine + S-adenosyl-L-methionine = 1,2-di-(9Z,12Z-octadecadienoyl)-sn-glycero-3-phospho-N-methylethanolamine + S-adenosyl-L-homocysteine + H(+). It catalyses the reaction 1,2-di-(9Z,12Z-octadecadienoyl)-sn-glycero-3-phospho-N-methylethanolamine + S-adenosyl-L-methionine = 1,2-di-(9Z,12Z-octadecadienoyl)-sn-glycero-3-phospho-N,N-dimethylethanolamine + S-adenosyl-L-homocysteine + H(+). The catalysed reaction is 1,2-di-(9Z,12Z-octadecadienoyl)-sn-glycero-3-phospho-N,N-dimethylethanolamine + S-adenosyl-L-methionine = 1,2-di-(9Z,12Z-octadecadienoyl)-sn-glycero-3-phosphocholine + S-adenosyl-L-homocysteine + H(+). It carries out the reaction 1,2-di-(9Z,12Z,15Z-octadecatrienoyl)-sn-glycero-3-phosphoethanolamine + S-adenosyl-L-methionine = 1,2-di-(9Z,12Z,15Z-octadecatrienoyl)-sn-glycero-3-phospho-N-methylethanolamine + S-adenosyl-L-homocysteine + H(+). The enzyme catalyses 1,2-di-(9Z,12Z,15Z-octadecatrienoyl)-sn-glycero-3-phospho-N-methylethanolamine + S-adenosyl-L-methionine = 1,2-di-(9Z,12Z,15Z-octadecatrienoyl)-sn-glycero-3-phospho-N,N-dimethylethanolamine + S-adenosyl-L-homocysteine + H(+). It catalyses the reaction 1,2-di-(9Z,12Z,15Z-octadecatrienoyl)-sn-glycero-3-phospho-N,N-dimethylethanolamine + S-adenosyl-L-methionine = 1,2-di-(9Z,12Z,15Z-octadecatrienoyl)-sn-glycero-3-phosphocholine + S-adenosyl-L-homocysteine + H(+). The catalysed reaction is 1-hexadecanoyl-2-(4Z,7Z,10Z,13Z,16Z,19Z-docosahexaenoyl)-sn-glycero-3-phosphoethanolamine + S-adenosyl-L-methionine = 1-hexadecanoyl-2-(4Z,7Z,10Z,13Z,16Z,19Z-docosahexaenoyl)-sn-glycero-3-phospho-N-methylethanolamine + S-adenosyl-L-homocysteine + H(+). It carries out the reaction 1-hexadecanoyl-2-(4Z,7Z,10Z,13Z,16Z,19Z-docosahexaenoyl)-sn-glycero-3-phospho-N-methylethanolamine + S-adenosyl-L-methionine = 1-hexadecanoyl-2-(4Z,7Z,10Z,13Z,16Z,19Z-docosahexaenoyl)-sn-glycero-3-phospho-N,N-dimethylethanolamine + S-adenosyl-L-homocysteine + H(+). The enzyme catalyses 1-hexadecanoyl-2-(4Z,7Z,10Z,13Z,16Z,19Z-docosahexaenoyl)-sn-glycero-3-phospho-N,N-dimethylethanolamine + S-adenosyl-L-methionine = 1-hexadecanoyl-2-(4Z,7Z,10Z,13Z,16Z,19Z-docosahexaenoyl)-sn-glycero-3-phosphocholine + S-adenosyl-L-homocysteine + H(+). Its pathway is phospholipid metabolism; phosphatidylcholine biosynthesis. Catalyzes the three sequential steps of the methylation pathway for the biosynthesis of phosphatidylcholine, a critical and essential component for membrane structure. Uses S-adenosylmethionine (S-adenosyl-L-methionine, SAM or AdoMet) as the methyl group donor for the methylation of phosphatidylethanolamine (1,2-diacyl-sn-glycero-3-phosphoethanolamine, PE) to phosphatidylmonomethylethanolamine (1,2-diacyl-sn-glycero-3-phospho-N-methylethanolamine, PMME), PMME to phosphatidyldimethylethanolamine (1,2-diacyl-sn-glycero-3-phospho-N,N-dimethylethanolamine, PDME), and PDME to phosphatidylcholine (1,2-diacyl-sn-glycero-3-phosphocholine, PC), producing S-adenosyl-L-homocysteine in each step. The chain is Phosphatidylethanolamine N-methyltransferase from Rattus norvegicus (Rat).